The primary structure comprises 146 residues: Ribosomal RNA large subunit methyltransferase H (146 aa).

S-adenosyl-L-methionine is bound by residues L68, G95, and 114-119 (LSSLTF).

The protein belongs to the RNA methyltransferase RlmH family. As to quaternary structure, homodimer.

It localises to the cytoplasm. It catalyses the reaction pseudouridine(1915) in 23S rRNA + S-adenosyl-L-methionine = N(3)-methylpseudouridine(1915) in 23S rRNA + S-adenosyl-L-homocysteine + H(+). Specifically methylates the pseudouridine at position 1915 (m3Psi1915) in 23S rRNA. This is Ribosomal RNA large subunit methyltransferase H from Thermodesulfovibrio yellowstonii (strain ATCC 51303 / DSM 11347 / YP87).